A 400-amino-acid polypeptide reads, in one-letter code: Large envelope protein (400 aa).

Disordered stretches follow at residues 1-50 (MGGW…PHKD) and 84-116 (ILTSVPAAPPPASTNRQSGRQPTPLSPPLRDTH). A lipid anchor (N-myristoyl glycine; by host) is attached at G2. The pre-S1 stretch occupies residues 2 to 119 (GGWSSKPRKG…PPLRDTHPQA (118 aa)). A pre-S region spans residues 2–174 (GGWSSKPRKG…LSTTGDPVPN (173 aa)). At 2–181 (GGWSSKPRKG…VPNMENIASG (180 aa)) the chain is on the virion surface; in external conformation side. At 2–253 (GGWSSKPRKG…PGYRWMCLRR (252 aa)) the chain is on the intravirion; in internal conformation side. A compositionally biased stretch (polar residues) spans 96 to 106 (STNRQSGRQPT). The tract at residues 120-174 (VQWNSTTFHQTLQDPRVRALYLPAGGSSSGTVSPAQNTVSAISSILSTTGDPVPN) is pre-S2. Residues 182–202 (LLGPLLVLQAGFFSLTKILTI) traverse the membrane as a helical segment. The Intravirion; in external conformation portion of the chain corresponds to 203–253 (PQSLDSWWTSLNFLGGTPVCLGQNSQSQISSHSPTCCPPICPGYRWMCLRR). The chain crosses the membrane as a helical span at residues 254–274 (FIIFLCILLLCLIFLLVLLDY). Topologically, residues 275–348 (QGMLPVCPLI…WASVRFSWLS (74 aa)) are virion surface. N320 carries N-linked (GlcNAc...) asparagine; by host glycosylation. Residues 349–369 (LLVPFVQWFVGLSPTVWLSVI) traverse the membrane as a helical segment. At 370-375 (WMMWFW) the chain is on the intravirion side. The chain crosses the membrane as a helical span at residues 376 to 398 (GPSLYNILSPFMPLLPIFLCLWV). At 399–400 (YM) the chain is on the virion surface side.

Belongs to the orthohepadnavirus major surface antigen family. In terms of assembly, li-HBsAg interacts with capsid protein and with HDV Large delta antigen. Isoform M associates with host chaperone CANX through its pre-S2 N glycan. This association may be essential for M proper secretion. Interacts (via its myristoylated pre-S1 region) with the host SLC10A1/NTCP; this interaction is essential for viral entry. Isoform M is N-terminally acetylated by host at a ratio of 90%, and N-glycosylated by host at the pre-S2 region. In terms of processing, myristoylated; this modification is essential for its interaction with the host protein SLC10A1/NTCP.

It is found in the virion membrane. The large envelope protein exists in two topological conformations, one which is termed 'external' or Le-HBsAg and the other 'internal' or Li-HBsAg. In its external conformation the protein attaches the virus to cell receptors and thereby initiating infection. This interaction determines the species specificity and liver tropism. This attachment induces virion internalization predominantly through caveolin-mediated endocytosis. The large envelope protein also assures fusion between virion membrane and endosomal membrane. In its internal conformation the protein plays a role in virion morphogenesis and mediates the contact with the nucleocapsid like a matrix protein. Its function is as follows. The middle envelope protein plays an important role in the budding of the virion. It is involved in the induction of budding in a nucleocapsid independent way. In this process the majority of envelope proteins bud to form subviral lipoprotein particles of 22 nm of diameter that do not contain a nucleocapsid. The polypeptide is Large envelope protein (Homo sapiens (Human)).